Consider the following 1896-residue polypeptide: Obscurin-like protein 1 (1896 aa).

Ser10 carries the post-translational modification Phosphoserine. Residues 12 to 100 (PCFLRFPRPV…GEAYAAAAVT (89 aa)) enclose the Ig-like 1 domain. Residues 17–19 (FPR) form an interaction with TTN region. An intrachain disulfide couples Cys33 to Cys84. Residues 85–94 (RARNAAGEAY) are interaction with TTN. The segment at 106-127 (ASDPELQPAERPLPSPGSGEGA) is disordered. 3 Ig-like domains span residues 128 to 225 (PVFL…ALLQ), 243 to 330 (PVVE…QTLS), and 339 to 425 (PRLR…ANVT). Disulfide bonds link Cys149–Cys209, Cys267–Cys319, and Cys362–Cys412. In terms of domain architecture, Fibronectin type-III spans 517-615 (PPGPPILAEM…FHGSAHLVPT (99 aa)). 10 Ig-like domains span residues 714 to 800 (PVHI…FGVT), 804 to 893 (PPVH…VTIT), 902 to 982 (PSGK…FTVT), 986 to 1075 (PPVR…VTVT), 1078 to 1172 (PERI…PPVQ), 1174 to 1261 (LALE…FTVQ), 1265 to 1357 (PPVR…VEEP), 1357 to 1534 (PLLV…ARLS), 1628 to 1720 (PVTI…RTVA), and 1794 to 1896 (PAQS…VEGN). Disulfide bonds link Cys738-Cys788, Cys829-Cys879, Cys920-Cys970, Cys1011-Cys1061, Cys1103-Cys1153, and Cys1195-Cys1245. Cystine bridges form between Cys1381/Cys1522 and Cys1650/Cys1700.

As to quaternary structure, component of the 3M complex, composed of core components CUL7, CCDC8 and OBSL1. Interacts with CCDC8. Interacts with CUL7; the interaction is direct. Interacts with FBXW8. Interacts (via N-terminal Ig-like domain) with TTN/titin (via C-terminal Ig-like domain); the interaction is direct. Widely expressed, with predominant levels found in the heart.

It localises to the cytoplasm. The protein localises to the cytoskeleton. The protein resides in the microtubule organizing center. Its subcellular location is the centrosome. It is found in the perinuclear region. It localises to the golgi apparatus. Functionally, core component of the 3M complex, a complex required to regulate microtubule dynamics and genome integrity. It is unclear how the 3M complex regulates microtubules, it could act by controlling the level of a microtubule stabilizer. Acts as a regulator of the Cul7-RING(FBXW8) ubiquitin-protein ligase, playing a critical role in the ubiquitin ligase pathway that regulates Golgi morphogenesis and dendrite patterning in brain. Required to localize CUL7 to the Golgi apparatus in neurons. The protein is Obscurin-like protein 1 of Homo sapiens (Human).